The chain runs to 151 residues: HTH-type transcriptional regulator FL11 (151 aa).

The 62-residue stretch at 5-66 (LDDIDKKIIE…VVNPEALGYN (62 aa)) folds into the HTH asnC-type domain. Residues 24-43 (LREISKITGLAESTIHERIK) constitute a DNA-binding region (H-T-H motif). Residue 98–104 (ETTGDYD) participates in L-arginine binding. L-lysine is bound by residues asparagine 118, aspartate 122, and 133–135 (THT). L-arginine contacts are provided by residues aspartate 122 and 133-135 (THT).

In terms of assembly, homodimer. Binds DNA as a dimer and an octamer.

In the famine mode, FL11 forms dimers and acts as a repressor, leading to growth arrest. In the feast mode, in the presence of high concentrations of lysine or arginine, four dimers assemble into an octamer and cover the fl11 and lysine biosynthesis promoters. This leads to the inhibition of fl11 expression and lysine biosynthesis, decrease of the FL11 concentration in the cell, derepression of the target genes and activation of the metabolism. Its function is as follows. DNA-binding protein involved in the repression of transcription of a large number of genes, thereby arresting growth, in response to environmental changes. The protein is HTH-type transcriptional regulator FL11 of Pyrococcus furiosus (strain ATCC 43587 / DSM 3638 / JCM 8422 / Vc1).